A 205-amino-acid chain; its full sequence is Dr1-associated corepressor (205 aa).

The 64-residue stretch at 14 to 77 (PARIKKIMQT…SHLKQCIELE (64 aa)) folds into the Histone-fold domain. The interval 91–205 (PDMQGDGEDN…EAEDEEDYDS (115 aa)) is disordered. Positions 98-108 (EDNHTDGDKGP) are enriched in basic and acidic residues. Positions 138 to 155 (SEQEDESEDTDTDGEEET) are enriched in acidic residues. The span at 172–193 (PPTPFMPFTSPLPLPPAPPGPS) shows a compositional bias: pro residues. Residues 196–205 (EAEDEEDYDS) show a composition bias toward acidic residues.

The protein belongs to the NC2 alpha/DRAP1 family. In terms of assembly, heterodimer with DR1. Binds BTAF1. In terms of processing, phosphorylation reduces DNA binding, but has no effect on heterodimerization and TBP binding.

It localises to the nucleus. Its function is as follows. The association of the DR1/DRAP1 heterodimer with TBP results in a functional repression of both activated and basal transcription of class II genes. This interaction precludes the formation of a transcription-competent complex by inhibiting the association of TFIIA and/or TFIIB with TBP. Can bind to DNA on its own. This is Dr1-associated corepressor from Rattus norvegicus (Rat).